The chain runs to 206 residues: Lipid A acyltransferase PagP (206 aa).

Residues 1–22 form the signal peptide; that stretch reads MKQMVCWLTAGLLTLGGLPARA. Residues 26 to 46 are compositionally biased toward low complexity; the sequence is VPAVPETPAAPAAPAVQETPA. Residues 26 to 50 form a disordered region; it reads VPAVPETPAAPAAPAVQETPASSAA. Residues His80, Asp123, and Ser124 contribute to the active site.

It belongs to the lipid A palmitoyltransferase family. Homodimer.

It localises to the cell outer membrane. The catalysed reaction is a lipid A + a 1,2-diacyl-sn-glycero-3-phosphocholine = a hepta-acyl lipid A + a 2-acyl-sn-glycero-3-phosphocholine. The enzyme catalyses a lipid IVA + a 1,2-diacyl-sn-glycero-3-phosphocholine = a lipid IVB + a 2-acyl-sn-glycero-3-phosphocholine. It catalyses the reaction a lipid IIA + a 1,2-diacyl-sn-glycero-3-phosphocholine = a lipid IIB + a 2-acyl-sn-glycero-3-phosphocholine. Its function is as follows. Transfers a fatty acid residue from the sn-1 position of a phospholipid to the N-linked hydroxyfatty acid chain on the proximal unit of lipid A or its precursors. This Laribacter hongkongensis (strain HLHK9) protein is Lipid A acyltransferase PagP.